Consider the following 392-residue polypeptide: Nucleolysin TIAR (392 aa).

RRM domains follow at residues arginine 9 to threonine 102 and phenylalanine 114 to arginine 192. Residue lysine 139 is modified to N6-acetyllysine. Residue serine 218 is modified to Phosphoserine. Residues cysteine 222 to glutamate 294 form the RRM 3 domain. The interval glycine 363 to glutamine 392 is disordered. Residues glycine 369–asparagine 380 are compositionally biased toward pro residues.

As to quaternary structure, interacts with FASTK. Phosphorylated by MAPK14 following DNA damage, releasing TIAR from GADD45A mRNA. In terms of tissue distribution, expressed both in primordial germ cells (PGCs) and in neighboring somatic cells.

It localises to the nucleus. Its subcellular location is the cytoplasm. It is found in the stress granule. The protein localises to the cytolytic granule. Its function is as follows. RNA-binding protein involved in alternative pre-RNA splicing and in cytoplasmic stress granules formation. Shows a preference for uridine-rich RNAs. Activates splicing of alternative exons with weak 5' splice sites followed by a U-rich stretch on its own pre-mRNA and on TIA1 mRNA. Promotes the inclusion of TIA1 exon 5 to give rise to the long isoform (isoform a) of TIA1. Acts downstream of the stress-induced phosphorylation of EIF2S1/EIF2A to promote the recruitment of untranslated mRNAs to cytoplasmic stress granules (SG). Possesses nucleolytic activity against cytotoxic lymphocyte target cells. May be involved in apoptosis. The polypeptide is Nucleolysin TIAR (Tial1) (Mus musculus (Mouse)).